Consider the following 91-residue polypeptide: Small ribosomal subunit protein uS15c (91 aa).

The protein belongs to the universal ribosomal protein uS15 family. In terms of assembly, part of the 30S ribosomal subunit.

It localises to the plastid. Its subcellular location is the chloroplast. This is Small ribosomal subunit protein uS15c (rps15) from Adiantum capillus-veneris (Maidenhair fern).